Here is a 144-residue protein sequence, read N- to C-terminus: Large ribosomal subunit protein uL13 (144 aa).

It belongs to the universal ribosomal protein uL13 family. As to quaternary structure, part of the 50S ribosomal subunit.

This protein is one of the early assembly proteins of the 50S ribosomal subunit, although it is not seen to bind rRNA by itself. It is important during the early stages of 50S assembly. In Mesomycoplasma hyopneumoniae (strain 7448) (Mycoplasma hyopneumoniae), this protein is Large ribosomal subunit protein uL13.